We begin with the raw amino-acid sequence, 108 residues long: Monothiol bacilliredoxin BrxC (108 aa).

C31 carries the S-bacillithiol cysteine disulfide modification.

As to quaternary structure, interacts with AbrB, BdhA, Bdr, BrxB, FolD, GapA, GapB, GatA, PfkA, PyrAA, PyrAB, PyrE, PyrG, PyrH, RpsB, RpsK, RpsL, SalA, SucC, Tuf and YtsJ. Cys can react with bacillithiol (BSH) to form mixed disulfides. S-bacillithiolation protects Cys residues against overoxidation by acting as a redox switch in response to oxidative stress.

Functionally, S-bacillithiolation is the formation of mixed disulfide bonds between protein thiols and the general thiol reductant bacillithiol (BSH) under oxidative stress. BSH is an equivalent of glutathione (GSH) in Firmicutes. This protein is a monothiol bacilliredoxin, which debacillithiolates (removes BSH) the S-bacillithiolated glyceraldehyde-3-phosphate dehydrogenases (GAPDHs) GapA and GapB in vivo and probably a number of other oxidized cytosolic proteins. Debacillithiolates the S-bacillithiolated Bdr (Bdr-SSB) and BrxB (BrxB-SSB) in vitro. Involved in maintaining redox homeostasis in response to disulfide stress conditions. This is Monothiol bacilliredoxin BrxC from Bacillus subtilis (strain 168).